The primary structure comprises 685 residues: Cilia- and flagella-associated protein 36 (685 aa).

Positions methionine 1–serine 20 are disordered. Positions serine 197–glutamine 242 form a coiled coil. Positions threonine 287 to threonine 310 are enriched in low complexity. Residues threonine 287–valine 573 are disordered. The span at glutamate 363 to proline 372 shows a compositional bias: basic and acidic residues. Polar residues predominate over residues glycine 410 to glutamate 434. Composition is skewed to basic and acidic residues over residues glycine 439–tyrosine 456 and histidine 508–proline 557.

The protein belongs to the CFAP36 family. As to expression, expressed in amphid and phasmid ciliated neurons.

Its subcellular location is the cell projection. It localises to the cilium. The protein resides in the cytoplasm. It is found in the cytoskeleton. The protein localises to the cilium axoneme. The protein is Cilia- and flagella-associated protein 36 of Caenorhabditis elegans.